A 371-amino-acid polypeptide reads, in one-letter code: Glutamate 5-kinase (371 aa).

Lys10 is a binding site for ATP. Residues Ser50, Asp137, and Asn149 each coordinate substrate. ATP-binding positions include 169–170 (SD) and 208–214 (TGGMFTK). The 79-residue stretch at 274–352 (EGRIYIDDGA…EEIRNILGED (79 aa)) folds into the PUA domain.

The protein belongs to the glutamate 5-kinase family.

It localises to the cytoplasm. It carries out the reaction L-glutamate + ATP = L-glutamyl 5-phosphate + ADP. The protein operates within amino-acid biosynthesis; L-proline biosynthesis; L-glutamate 5-semialdehyde from L-glutamate: step 1/2. Functionally, catalyzes the transfer of a phosphate group to glutamate to form L-glutamate 5-phosphate. The protein is Glutamate 5-kinase of Dictyoglomus turgidum (strain DSM 6724 / Z-1310).